Reading from the N-terminus, the 246-residue chain is 3-deoxy-manno-octulosonate cytidylyltransferase (246 aa).

Belongs to the KdsB family.

The protein localises to the cytoplasm. It carries out the reaction 3-deoxy-alpha-D-manno-oct-2-ulosonate + CTP = CMP-3-deoxy-beta-D-manno-octulosonate + diphosphate. The protein operates within nucleotide-sugar biosynthesis; CMP-3-deoxy-D-manno-octulosonate biosynthesis; CMP-3-deoxy-D-manno-octulosonate from 3-deoxy-D-manno-octulosonate and CTP: step 1/1. It functions in the pathway bacterial outer membrane biogenesis; lipopolysaccharide biosynthesis. In terms of biological role, activates KDO (a required 8-carbon sugar) for incorporation into bacterial lipopolysaccharide in Gram-negative bacteria. This chain is 3-deoxy-manno-octulosonate cytidylyltransferase, found in Myxococcus xanthus (strain DK1622).